Reading from the N-terminus, the 297-residue chain is UDP-N-acetylenolpyruvoylglucosamine reductase (297 aa).

Positions 22-195 (RVGGPAQYYA…LAGRFRLHRA (174 aa)) constitute an FAD-binding PCMH-type domain. Arginine 169 is an active-site residue. The active-site Proton donor is serine 223. Residue glutamate 293 is part of the active site.

Belongs to the MurB family. The cofactor is FAD.

It localises to the cytoplasm. The enzyme catalyses UDP-N-acetyl-alpha-D-muramate + NADP(+) = UDP-N-acetyl-3-O-(1-carboxyvinyl)-alpha-D-glucosamine + NADPH + H(+). It functions in the pathway cell wall biogenesis; peptidoglycan biosynthesis. Cell wall formation. The polypeptide is UDP-N-acetylenolpyruvoylglucosamine reductase (Chloroflexus aggregans (strain MD-66 / DSM 9485)).